The sequence spans 238 residues: Uridylate kinase (238 aa).

Residue 13–16 participates in ATP binding; the sequence is KLSG. Residue Gly53 participates in UMP binding. ATP-binding residues include Gly54 and Arg58. UMP-binding positions include Asp73 and 134-141; that span reads AGLPYFST. The ATP site is built by Asn162, Tyr168, and Asp171.

The protein belongs to the UMP kinase family. In terms of assembly, homohexamer.

The protein localises to the cytoplasm. The catalysed reaction is UMP + ATP = UDP + ADP. Its pathway is pyrimidine metabolism; CTP biosynthesis via de novo pathway; UDP from UMP (UMPK route): step 1/1. Inhibited by UTP. In terms of biological role, catalyzes the reversible phosphorylation of UMP to UDP. This is Uridylate kinase from Clavibacter michiganensis subsp. michiganensis (strain NCPPB 382).